Reading from the N-terminus, the 477-residue chain is Pup--protein ligase (477 aa).

E16 is a Mg(2+) binding site. R60 contacts ATP. Residue Y62 participates in Mg(2+) binding. Catalysis depends on D64, which acts as the Proton acceptor. E70 contributes to the Mg(2+) binding site. Residues T73 and W441 each coordinate ATP.

It belongs to the Pup ligase/Pup deamidase family. Pup-conjugating enzyme subfamily.

It carries out the reaction ATP + [prokaryotic ubiquitin-like protein]-L-glutamate + [protein]-L-lysine = ADP + phosphate + N(6)-([prokaryotic ubiquitin-like protein]-gamma-L-glutamyl)-[protein]-L-lysine.. It functions in the pathway protein degradation; proteasomal Pup-dependent pathway. Its pathway is protein modification; protein pupylation. Its function is as follows. Catalyzes the covalent attachment of the prokaryotic ubiquitin-like protein modifier Pup to the proteasomal substrate proteins, thereby targeting them for proteasomal degradation. This tagging system is termed pupylation. The ligation reaction involves the side-chain carboxylate of the C-terminal glutamate of Pup and the side-chain amino group of a substrate lysine. The protein is Pup--protein ligase of Corynebacterium kroppenstedtii (strain DSM 44385 / JCM 11950 / CIP 105744 / CCUG 35717).